We begin with the raw amino-acid sequence, 177 residues long: ATP-dependent protease subunit HslV (177 aa).

Residue T7 is part of the active site. Na(+)-binding residues include G162, C165, and T168.

It belongs to the peptidase T1B family. HslV subfamily. In terms of assembly, a double ring-shaped homohexamer of HslV is capped on each side by a ring-shaped HslU homohexamer. The assembly of the HslU/HslV complex is dependent on binding of ATP.

It is found in the cytoplasm. It catalyses the reaction ATP-dependent cleavage of peptide bonds with broad specificity.. With respect to regulation, allosterically activated by HslU binding. Functionally, protease subunit of a proteasome-like degradation complex believed to be a general protein degrading machinery. The polypeptide is ATP-dependent protease subunit HslV (Persephonella marina (strain DSM 14350 / EX-H1)).